The following is a 329-amino-acid chain: tRNA N6-adenosine threonylcarbamoyltransferase (329 aa).

Fe cation is bound by residues histidine 110 and histidine 114. Substrate-binding positions include 132–136 (VISGG), aspartate 165, glycine 178, and asparagine 271. Aspartate 299 provides a ligand contact to Fe cation.

It belongs to the KAE1 / TsaD family. Requires Fe(2+) as cofactor.

Its subcellular location is the cytoplasm. It carries out the reaction L-threonylcarbamoyladenylate + adenosine(37) in tRNA = N(6)-L-threonylcarbamoyladenosine(37) in tRNA + AMP + H(+). Required for the formation of a threonylcarbamoyl group on adenosine at position 37 (t(6)A37) in tRNAs that read codons beginning with adenine. Is involved in the transfer of the threonylcarbamoyl moiety of threonylcarbamoyl-AMP (TC-AMP) to the N6 group of A37, together with TsaE and TsaB. TsaD likely plays a direct catalytic role in this reaction. The sequence is that of tRNA N6-adenosine threonylcarbamoyltransferase from Neorickettsia sennetsu (strain ATCC VR-367 / Miyayama) (Ehrlichia sennetsu).